The following is a 381-amino-acid chain: ELMO domain-containing protein 3 (381 aa).

Positions 170 to 324 (THGRVLQTIY…DLEALAKKSP (155 aa)) constitute an ELMO domain.

In terms of tissue distribution, both isoform 1 and isoform 2 are widely expressed.

The protein localises to the cell projection. The protein resides in the stereocilium. Its subcellular location is the kinocilium. It is found in the cytoplasm. It localises to the cytoskeleton. Acts as a GTPase-activating protein (GAP) for ARL2 with low specific activity. The protein is ELMO domain-containing protein 3 (Elmod3) of Mus musculus (Mouse).